Reading from the N-terminus, the 213-residue chain is LexA repressor 2 (213 aa).

The segment at residues 27–47 is a DNA-binding region (H-T-H motif); that stretch reads QTEIARAFGFKGVRAAQYHLE. Residues Ser-133 and Lys-170 each act as for autocatalytic cleavage activity in the active site.

This sequence belongs to the peptidase S24 family. In terms of assembly, homodimer.

It carries out the reaction Hydrolysis of Ala-|-Gly bond in repressor LexA.. Represses a number of genes involved in the response to DNA damage (SOS response), including recA and lexA. In the presence of single-stranded DNA, RecA interacts with LexA causing an autocatalytic cleavage which disrupts the DNA-binding part of LexA, leading to derepression of the SOS regulon and eventually DNA repair. The chain is LexA repressor 2 from Xanthomonas campestris pv. campestris (strain ATCC 33913 / DSM 3586 / NCPPB 528 / LMG 568 / P 25).